Consider the following 339-residue polypeptide: Quinolinate synthase (339 aa).

The iminosuccinate site is built by His-63 and Ser-81. Cys-126 contacts [4Fe-4S] cluster. Iminosuccinate contacts are provided by residues 152-154 (YVN) and Ser-169. Cys-211 serves as a coordination point for [4Fe-4S] cluster. Residues 237–239 (HPE) and Thr-254 each bind iminosuccinate. Residue Cys-297 coordinates [4Fe-4S] cluster.

Belongs to the quinolinate synthase family. Type 2 subfamily. The cofactor is [4Fe-4S] cluster.

It localises to the cytoplasm. It catalyses the reaction iminosuccinate + dihydroxyacetone phosphate = quinolinate + phosphate + 2 H2O + H(+). It participates in cofactor biosynthesis; NAD(+) biosynthesis; quinolinate from iminoaspartate: step 1/1. In terms of biological role, catalyzes the condensation of iminoaspartate with dihydroxyacetone phosphate to form quinolinate. The chain is Quinolinate synthase from Xylella fastidiosa (strain Temecula1 / ATCC 700964).